A 494-amino-acid chain; its full sequence is Probable cytochrome P450 515A1 (494 aa).

Residues 1-21 (MILGIILGLFIYIYLINIKFF) form a helical membrane-spanning segment. Cys440 lines the heme pocket.

It belongs to the cytochrome P450 family. The cofactor is heme.

Its subcellular location is the membrane. The polypeptide is Probable cytochrome P450 515A1 (cyp515A1) (Dictyostelium discoideum (Social amoeba)).